Here is a 102-residue protein sequence, read N- to C-terminus: Large ribosomal subunit protein bL21 (102 aa).

This sequence belongs to the bacterial ribosomal protein bL21 family. In terms of assembly, part of the 50S ribosomal subunit. Contacts protein L20.

In terms of biological role, this protein binds to 23S rRNA in the presence of protein L20. The protein is Large ribosomal subunit protein bL21 of Bacillus pumilus (strain SAFR-032).